An 849-amino-acid polypeptide reads, in one-letter code: Neprilysin-1 (849 aa).

The Cytoplasmic portion of the chain corresponds to 1–113; that stretch reads MSQQHEATAA…LKESQQRRRL (113 aa). Over residues 41-61 the composition is skewed to low complexity; that stretch reads QQQVQHQAPHQMQQQQQQQQQ. The disordered stretch occupies residues 41–63; sequence QQQVQHQAPHQMQQQQQQQQQNK. The helical; Signal-anchor for type II membrane protein transmembrane segment at 114–134 threads the bilayer; sequence LVLAIAFTVLGAAIGALAIYF. The Extracellular segment spans residues 135–849; sequence ASVHQRCHLY…MNPAEKCSVW (715 aa). Residues 146–155 are compositionally biased toward basic and acidic residues; that stretch reads LEPDNDDRPN. The interval 146-167 is disordered; sequence LEPDNDDRPNGRWNQDSGSAHE. Residues 172-849 enclose the Peptidase M13 domain; it reads ICMTQECVRT…MNPAEKCSVW (678 aa). 5 disulfide bridges follow: cysteine 173-cysteine 178, cysteine 196-cysteine 834, cysteine 204-cysteine 794, cysteine 260-cysteine 512, and cysteine 721-cysteine 846. N-linked (GlcNAc...) asparagine glycosylation is found at asparagine 309, asparagine 326, asparagine 393, asparagine 589, and asparagine 599. Histidine 684 contributes to the Zn(2+) binding site. Glutamate 685 is an active-site residue. Position 688 (histidine 688) interacts with Zn(2+). An N-linked (GlcNAc...) asparagine glycan is attached at asparagine 709. Residue glutamate 746 participates in Zn(2+) binding. Catalysis depends on aspartate 750, which acts as the Proton donor. Asparagine 778 carries N-linked (GlcNAc...) asparagine glycosylation.

The protein belongs to the peptidase M13 family. Zn(2+) is required as a cofactor. In terms of tissue distribution, expressed in the testicular tube, near and in the seminal vesicles. In adults and third-instar larvae, expressed in the midgut and in the mushroom bodies of the brain and neurons in the pars intercerebralis. Also expressed in neurons of the ventral ganglion and imaginal disks (wing and leg) of third-instar larvae. In stage 17 embryos, expressed in the peripheral nervous system, pharynx and midgut.

It localises to the cell membrane. The catalysed reaction is Preferential cleavage of polypeptides between hydrophobic residues, particularly with Phe or Tyr at P1'.. Metalloendoprotease which functions in fertility and memory formation. Required in the dorsal paired medial neurons and alpha/beta mushroom body neurons for the proper formation of long-term and middle-term memories. Required in males to maximise egg-laying in female mates and is also required in females for their fertility. The chain is Neprilysin-1 from Drosophila melanogaster (Fruit fly).